The chain runs to 445 residues: MAELKYISGFGNECSSEDPRCPGSLPEGQNNPQVCPYNLYAEQLSGSAFTCPRSTNKRSWLYRILPSVSHKPFESIDEGQVTHNWDEVDPDPNQLRWKPFEIPKASQKKVDFVSGLHTLCGAGDIKSNNGLAIHIFLCNTSMENRCFYNSDGDFLIVPQKGNLLIYTEFGKMLVQPNEICVIQRGMRFSIDVFEETRGYILEVYGVHFELPDLGPIGANGLANPRDFLIPIAWYEDRQVPGGYTVINKYQGKLFAAKQDVSPFNVVAWHGNYTPYKYNLKNFMVINSVAFDHADPSIFTVLTAKSVRPGVAIADFVIFPPRWGVADKTFRPPYYHRNCMSEFMGLIRGHYEAKQGGFLPGGGSLHSTMTPHGPDADCFEKASKVKLAPERIADGTMAFMFESSLSLAVTKWGLKASRCLDENYHKCWEPLKSHFTPNSRNPAEPN.

K98 is subject to N6-acetyllysine. Fe cation-binding residues include H335, E341, and H371. An N6-succinyllysine modification is found at K414.

Belongs to the homogentisate dioxygenase family. In terms of assembly, homohexamer arranged as a dimer of trimers. The cofactor is Fe cation. Highest expression in the prostate, small intestine, colon, kidney and liver.

The enzyme catalyses homogentisate + O2 = 4-maleylacetoacetate + H(+). It functions in the pathway amino-acid degradation; L-phenylalanine degradation; acetoacetate and fumarate from L-phenylalanine: step 4/6. In terms of biological role, catalyzes the conversion of homogentisate to maleylacetoacetate. This is Homogentisate 1,2-dioxygenase (HGD) from Homo sapiens (Human).